The sequence spans 688 residues: Envelope glycoprotein gp70 (688 aa).

Over residues 1–15 the composition is skewed to polar residues; it reads MPKHQSGSPTDSSDL. The interval 1–37 is disordered; it reads MPKHQSGSPTDSSDLLLSGKKQRPHLALRRKRRREMR. Residues 1–98 form the signal peptide; the sequence is MPKHQSGSPT…SVLGPPPVTG (98 aa). The span at 20–37 shows a compositional bias: basic residues; it reads KKQRPHLALRRKRRREMR. Residues 99–624 lie on the Extracellular side of the membrane; the sequence is ESYWAYLPKP…ALNPLDWTQY (526 aa). Asn-127 and Asn-143 each carry an N-linked (GlcNAc...) asparagine; by host glycan. Residues 426-474 adopt a coiled-coil conformation; sequence LLPVDIGDEPWFDDSAIQTFRYATDLIRAKRFVAAIILGISALIAIITS. A propeptide spanning residues 455–456 is cleaved from the precursor; it reads KR. Residues 457–477 are fusion peptide; the sequence is FVAAIILGISALIAIITSFAV. Positions 463–481 are immunosuppression; it reads LGISALIAIITSFAVATTA. N-linked (GlcNAc...) asparagine; by host glycosylation is present at Asn-498. Residues 511 to 541 adopt a coiled-coil conformation; the sequence is LKLEARLNALEEVVLELGQDVANLKTRMSTR. An N-linked (GlcNAc...) asparagine; by host glycan is attached at Asn-557. The chain crosses the membrane as a helical span at residues 625–645; it reads FIFIGVGALLLVIVLMIFPIV. Residues 646-688 lie on the Cytoplasmic side of the membrane; that stretch reads FQCLAKSLDQVQSDLNVLLLKKKKGGNAAPAAEMVELPRVSYT.

The mature envelope protein (Env) consists of a trimer of SU-TM heterodimers attached by noncovalent interactions or by a labile interchain disulfide bond. Specific enzymatic cleavages in vivo yield mature proteins. Envelope glycoproteins are synthesized as an inactive precursor that is N-glycosylated and processed likely by host cell furin or by a furin-like protease in the Golgi to yield the mature SU and TM proteins. The cleavage site between SU and TM requires the minimal sequence [KR]-X-[KR]-R.

It is found in the virion membrane. It localises to the host cell membrane. The surface protein (SU) attaches the virus to the host cell by binding to its receptor. This interaction triggers the refolding of the transmembrane protein (TM) and is thought to activate its fusogenic potential by unmasking its fusion peptide. Fusion occurs at the host cell plasma membrane. In terms of biological role, the transmembrane protein (TM) acts as a class I viral fusion protein. Under the current model, the protein has at least 3 conformational states: pre-fusion native state, pre-hairpin intermediate state, and post-fusion hairpin state. During viral and target cell membrane fusion, the coiled coil regions (heptad repeats) assume a trimer-of-hairpins structure, positioning the fusion peptide in close proximity to the C-terminal region of the ectodomain. The formation of this structure appears to drive apposition and subsequent fusion of viral and target cell membranes. Membranes fusion leads to delivery of the nucleocapsid into the cytoplasm. The chain is Envelope glycoprotein gp70 (env) from Mouse mammary tumor virus (strain BR6) (MMTV).